We begin with the raw amino-acid sequence, 352 residues long: Decapping nuclease din1 (352 aa).

Substrate contacts are provided by residues arginine 33 and 93–95; that span reads WRG. Glutamate 150 is an a divalent metal cation binding site. Positions 182 and 199 each coordinate substrate. Aspartate 201 is a binding site for a divalent metal cation. A Phosphoserine modification is found at serine 218. Positions 239 and 240 each coordinate a divalent metal cation. Substrate is bound by residues lysine 241 and glutamine 263.

The protein belongs to the DXO/Dom3Z family. Interacts with dhp1/Rat1; the interaction is direct, stabilizes dhp1 protein structure and stimulates its exoribonuclease activity. The interaction also stimulates din1 pyrophosphohydrolase activity, probably by recruiting it to mRNA substrates. It depends on a divalent metal cation as a cofactor.

It localises to the nucleus. The enzyme catalyses a 5'-end NAD(+)-phospho-ribonucleoside in mRNA + H2O = a 5'-end phospho-ribonucleoside in mRNA + NAD(+) + H(+). It catalyses the reaction a 5'-end (N(7)-methyl 5'-triphosphoguanosine)-ribonucleoside-ribonucleotide in mRNA + H2O = a (N(7)-methyl 5'-triphosphoguanosine)-nucleoside + a 5'-end phospho-ribonucleoside in mRNA + H(+). The catalysed reaction is a 5'-end triphospho-ribonucleoside in mRNA + H2O = a 5'-end phospho-ribonucleoside in mRNA + diphosphate + H(+). Its function is as follows. Decapping enzyme for NAD-capped RNAs: specifically hydrolyzes the nicotinamide adenine dinucleotide (NAD) cap from a subset of RNAs by removing the entire NAD moiety from the 5'-end of an NAD-capped RNA. The NAD-cap is present at the 5'-end of some RNAs and snoRNAs. In contrast to the canonical 5'-end N7 methylguanosine (m7G) cap, the NAD cap promotes mRNA decay. Also acts as a non-canonical decapping enzyme that removes the entire cap structure of m7G capped or incompletely capped RNAs and mediates their subsequent degradation. Specifically degrades pre-mRNAs with a defective m7G cap and is part of a pre-mRNA capping quality control. Has decapping activity toward incomplete 5'-end m7G cap mRNAs such as unmethylated 5'-end-capped RNA (cap0), while it has no activity toward 2'-O-ribose methylated m7G cap (cap1). Also possesses RNA 5'-pyrophosphohydrolase activity by hydrolyzing the 5'-end triphosphate to release pyrophosphates. Stimulates exoribonuclease activity of dhp1, allowing it to degrade RNAs with stable secondary structure more effectively. This chain is Decapping nuclease din1, found in Schizosaccharomyces pombe (strain 972 / ATCC 24843) (Fission yeast).